Reading from the N-terminus, the 456-residue chain is E3 ubiquitin-protein ligase RNF25 (456 aa).

The RWD domain maps to 18 to 127; sequence SEVEVLESIY…EKGKEILTDN (110 aa). 8 residues coordinate Zn(2+): Cys134, Cys137, Cys152, His154, His157, Cys160, Cys195, and Cys198. Residues 134-199 form an RING-type zinc finger; that stretch reads CVICLYGFQE…AVGVQCPVCR (66 aa). The disordered stretch occupies residues 269 to 456; sequence LEPESAVDVS…PLGLESEEGS (188 aa). A compositionally biased stretch (polar residues) spans 288–332; it reads SAEQSTSLADQSTLPTSLPMTTQYTYEKTSGAGPNQQRPGETQKS. Composition is skewed to basic and acidic residues over residues 364–388 and 410–421; these read SEIHELPPPEKPLKETVDLKAEPRN and RTRDCARWERSK.

The protein belongs to the RNF25 family. Interacts with UBE2D2, and may also interact with UBE2E1 and UBE2E3. Interacts with RELA/p65. Post-translationally, ubiquitinated; autoubiquitinated. In terms of tissue distribution, ubiquitous.

It is found in the cytoplasm. The enzyme catalyses S-ubiquitinyl-[E2 ubiquitin-conjugating enzyme]-L-cysteine + [acceptor protein]-L-lysine = [E2 ubiquitin-conjugating enzyme]-L-cysteine + N(6)-ubiquitinyl-[acceptor protein]-L-lysine.. Its pathway is protein modification; protein ubiquitination. Functionally, E3 ubiquitin-protein ligase that plays a key role in the RNF14-RNF25 translation quality control pathway, a pathway that takes place when a ribosome has stalled during translation, and which promotes ubiquitination and degradation of translation factors on stalled ribosomes. Catalyzes ubiquitination of RPS27A in response to ribosome collisions, promoting activation of RNF14. RNF25 catalyzes ubiquitination of other ribosomal proteins on stalled ribosomes, such as RPL0, RPL1, RPL12, RPS13 and RPS17. Also involved in ubiquitination and degradation of stalled ETF1/eRF1. Independently of its function in the response to stalled ribosomes, mediates ubiquitination and subsequent proteasomal degradation of NKD2. May also stimulate transcription mediated by NF-kappa-B via its interaction with RELA/p65. In Mus musculus (Mouse), this protein is E3 ubiquitin-protein ligase RNF25.